The chain runs to 130 residues: Serum amyloid A-4 protein (130 aa).

Residues 1–18 form the signal peptide; sequence MRLFTGIVFCSLVMGVTS. N-linked (GlcNAc...) asparagine; partial glycosylation occurs at Asn-94. The tract at residues 101–130 is disordered; sequence DSKSNEKAEEWGRSGKDPDRFRPDGLPKKY.

This sequence belongs to the SAA family. As to quaternary structure, apolipoprotein of the HDL complex. Expressed by the liver; secreted in plasma.

It is found in the secreted. Major acute phase reactant. The sequence is that of Serum amyloid A-4 protein from Homo sapiens (Human).